The sequence spans 84 residues: Putative defensin-like protein 63 (84 aa).

Residues 1–21 (MDIRKTYVIIFFVGILTISFS) form the signal peptide. Intrachain disulfides connect Cys-40–Cys-81, Cys-44–Cys-67, Cys-53–Cys-79, and Cys-57–Cys-80.

It belongs to the DEFL family.

The protein resides in the secreted. This is Putative defensin-like protein 63 from Arabidopsis thaliana (Mouse-ear cress).